Here is a 905-residue protein sequence, read N- to C-terminus: Coatomer subunit beta' (905 aa).

WD repeat units follow at residues 13–52 (ARSDRVKSVDLHPTEPWMLASLYNGSVCVWNHETQTLVKT), 55–94 (VCDLPVRAAKFVARKNWVVTGADDMQIRVFNYNTLERVHM), 97–136 (AHSDYIRCIAVHPTQPFILTSSDDMLIKLWDWDKKWSCSQ), 140–180 (GHTH…PNFT), 183–224 (GHEK…CVQT), 227–266 (GHAQNVSCASFHPELPIIITGSEDGTVRIWHSSTYRLEST), 350–388 (SCEIYPQTIQHNPNGRFVVVCGDGEYIIYTAMALRNKSF), and 390–425 (SAQEFAWAHDSSEYAIRESNSIVKIFKNFKEKKSFK). Lys627 is subject to N6-acetyllysine. A WD 9 repeat occupies 746–783 (IRTGRLPEAAFLARTYLPSQVSRVVKLWRENLSKVNQK). The tract at residues 837–873 (EEAKGFQPSRPTAQQEPDGKPASSPVIMASQTTHKEE) is disordered. Phosphoserine is present on Ser859. Positions 867–891 (QTTHKEEKSLLELEVDLDNLELEDI) form a coiled coil.

The protein belongs to the WD repeat COPB2 family. Oligomeric complex that consists of at least the alpha, beta, beta', gamma, delta, epsilon and zeta subunits. Probably interacts with PEX11A. Interacts with SCYL1. Interacts with JAGN1.

Its subcellular location is the cytoplasm. It localises to the cytosol. It is found in the golgi apparatus membrane. The protein resides in the cytoplasmic vesicle. The protein localises to the COPI-coated vesicle membrane. The coatomer is a cytosolic protein complex that binds to dilysine motifs and reversibly associates with Golgi non-clathrin-coated vesicles, which further mediate biosynthetic protein transport from the ER, via the Golgi up to the trans Golgi network. Coatomer complex is required for budding from Golgi membranes, and is essential for the retrograde Golgi-to-ER transport of dilysine-tagged proteins. In mammals, the coatomer can only be recruited by membranes associated to ADP-ribosylation factors (ARFs), which are small GTP-binding proteins; the complex also influences the Golgi structural integrity, as well as the processing, activity, and endocytic recycling of LDL receptors. Its function is as follows. This coatomer complex protein, essential for Golgi budding and vesicular trafficking, is a selective binding protein (RACK) for protein kinase C, epsilon type. It binds to Golgi membranes in a GTP-dependent manner. The protein is Coatomer subunit beta' (Copb2) of Mus musculus (Mouse).